Reading from the N-terminus, the 511-residue chain is Coatomer subunit delta (511 aa).

Basic and acidic residues predominate over residues 167 to 177; the sequence is QQARRDAERQG. The disordered stretch occupies residues 167 to 188; sequence QQARRDAERQGKKAPGFGGFGS. Serine 223 bears the Phosphoserine mark. An N6-acetyllysine mark is found at lysine 233 and lysine 241. Position 244 is a phosphoserine (serine 244). The MHD domain occupies 271-511; the sequence is MESVHMKIEE…TFLVDKYEIL (241 aa). N6-acetyllysine occurs at positions 309 and 351. The residue at position 493 (serine 493) is a Phosphoserine.

The protein belongs to the adaptor complexes medium subunit family. Delta-COP subfamily. Oligomeric complex that consists of at least the alpha, beta, beta', gamma, delta, epsilon and zeta subunits.

It localises to the cytoplasm. It is found in the golgi apparatus membrane. The protein localises to the cytoplasmic vesicle. The protein resides in the COPI-coated vesicle membrane. Its function is as follows. The coatomer is a cytosolic protein complex that binds to dilysine motifs and reversibly associates with Golgi non-clathrin-coated vesicles, which further mediate biosynthetic protein transport from the ER, via the Golgi up to the trans Golgi network. Coatomer complex is required for budding from Golgi membranes, and is essential for the retrograde Golgi-to-ER transport of dilysine-tagged proteins. In mammals, the coatomer can only be recruited by membranes associated to ADP-ribosylation factors (ARFs), which are small GTP-binding proteins; the complex also influences the Golgi structural integrity, as well as the processing, activity, and endocytic recycling of LDL receptors. This chain is Coatomer subunit delta (ARCN1), found in Pongo abelii (Sumatran orangutan).